The chain runs to 205 residues: Guanylate kinase (205 aa).

A Guanylate kinase-like domain is found at 7 to 185; that stretch reads GNIFIISAAS…AEEDLRHIVN (179 aa). Residue 14 to 21 coordinates ATP; sequence AASGTGKT.

Belongs to the guanylate kinase family.

The protein localises to the cytoplasm. It carries out the reaction GMP + ATP = GDP + ADP. Functionally, essential for recycling GMP and indirectly, cGMP. The chain is Guanylate kinase (gmk) from Neisseria meningitidis serogroup A / serotype 4A (strain DSM 15465 / Z2491).